We begin with the raw amino-acid sequence, 460 residues long: Photosystem II CP43 reaction center protein (460 aa).

At 1–35 the chain is on the cytoplasmic side; it reads MVTLSNTSMVGGRDLPSTGFAWWSGNARLINLSGK. Residues 36 to 58 form a helical membrane-spanning segment; the sequence is LLGAHVAHAGLIVFWAGAMTLFE. The Lumenal, thylakoid portion of the chain corresponds to 59-98; it reads VAHFIPEKPMYEQGLILLPHIATLGWGVGPAGEVTDIFPF. The chain crosses the membrane as a helical span at residues 99–121; it reads FVVGVLHLISSAVLGLGGIYHAL. Residues 122 to 142 are Cytoplasmic-facing; that stretch reads RGPEVLEEYSSFFGYDWKDKN. The chain crosses the membrane as a helical span at residues 143–165; the sequence is QMTNIIGYHLILLGCGALLLVFK. Residues 166-220 lie on the Lumenal, thylakoid side of the membrane; that stretch reads AMFFGGVYDTWAPGGGDVRVITNPTLNPAIIFGYLLKAPFGGEGWIISVNNMEDI. A helical transmembrane segment spans residues 221-240; it reads IGGHIWIGLICISGGIWHIL. Residues 241 to 255 lie on the Cytoplasmic side of the membrane; sequence TKPFGWARRALIWSG. The helical transmembrane segment at 256-276 threads the bilayer; it reads EAYLSYSLGALSLMGFIASVF. Residues 277–411 are Lumenal, thylakoid-facing; the sequence is VWFNNTAYPS…NSFNYVSPRA (135 aa). Residues Glu341 and Arg344 each coordinate [CaMn4O5] cluster. A helical transmembrane segment spans residues 412–436; sequence WLATSHFVLGFFFLVGHLWHAGRAR. The Cytoplasmic segment spans residues 437 to 460; sequence AAAAGFEKGIDRETEPTLFMPDLD.

Belongs to the PsbB/PsbC family. PsbC subfamily. In terms of assembly, PSII is composed of 1 copy each of membrane proteins PsbA, PsbB, PsbC, PsbD, PsbE, PsbF, PsbH, PsbI, PsbJ, PsbK, PsbL, PsbM, PsbT, PsbX, PsbY, PsbZ, Psb30/Ycf12, peripheral proteins PsbO, CyanoQ (PsbQ), PsbU, PsbV and a large number of cofactors. It forms dimeric complexes. It depends on Binds multiple chlorophylls and provides some of the ligands for the Ca-4Mn-5O cluster of the oxygen-evolving complex. It may also provide a ligand for a Cl- that is required for oxygen evolution. PSII binds additional chlorophylls, carotenoids and specific lipids. as a cofactor.

The protein localises to the cellular thylakoid membrane. Its function is as follows. One of the components of the core complex of photosystem II (PSII). PSII binds chlorophyll and helps catalyze the primary light-induced photochemical processes of PSII. PSII is a light-driven water:plastoquinone oxidoreductase, using light energy to abstract electrons from H(2)O, generating O(2) and a proton gradient subsequently used for ATP formation. Required for correct assembly of PSII. The sequence is that of Photosystem II CP43 reaction center protein from Synechocystis sp. (strain ATCC 27184 / PCC 6803 / Kazusa).